The primary structure comprises 337 residues: D-lactate dehydrogenase (337 aa).

NAD(+)-binding positions include 156–157 (HI), Asp-176, 207–208 (VP), Asn-213, 234–236 (CSR), and Asp-260. The active site involves Arg-236. The active site involves Glu-265. The active-site Proton donor is the His-297.

This sequence belongs to the D-isomer specific 2-hydroxyacid dehydrogenase family. In terms of assembly, homodimer.

The enzyme catalyses (R)-lactate + NAD(+) = pyruvate + NADH + H(+). This is D-lactate dehydrogenase from Lactobacillus helveticus (Lactobacillus suntoryeus).